The primary structure comprises 365 residues: Outer capsid protein sigma-3 (365 aa).

The CCHC-type zinc finger occupies 51–73 (CMHCLGVVGSLQRKLKHLPHHRC).

This sequence belongs to the orthoreovirus sigma-3 protein family. Heterohexamer of three sigma-3 and three Mu-1 proteins. The RNA-binding form is probably a homodimer. Cleaved during virus the endosomal proteolytic disassembly of the outer capsid.

It localises to the virion. Stimulates translation by blocking the activation of the dsRNA-dependent protein kinase EIF2AK2/PKR, thereby inhibiting the host interferon response. Sigma3 prevents the activation of EIF2AK2 by competing with the kinase for dsRNA-binding. In terms of biological role, the viral outer shell polypeptides, of which sigma-3 is one, impose structural constraints that prevent elongation of nascent transcripts by the RNA-dependent RNA polymerase lambda-3. In Mammalia (T1L), this protein is Outer capsid protein sigma-3 (S4).